Consider the following 200-residue polypeptide: Holliday junction resolvase RecU (200 aa).

The interval 1 to 27 (MALKYPSGKEYRGNKPNAARRPAADYA) is disordered. Mg(2+) contacts are provided by threonine 84, aspartate 86, glutamate 99, and glutamine 118.

The protein belongs to the RecU family. In terms of assembly, homodimer. It depends on Mg(2+) as a cofactor.

The protein localises to the cytoplasm. The catalysed reaction is Endonucleolytic cleavage at a junction such as a reciprocal single-stranded crossover between two homologous DNA duplexes (Holliday junction).. Endonuclease that resolves Holliday junction intermediates in genetic recombination. Cleaves mobile four-strand junctions by introducing symmetrical nicks in paired strands. Promotes annealing of linear ssDNA with homologous dsDNA. Required for DNA repair, homologous recombination and chromosome segregation. The protein is Holliday junction resolvase RecU of Geobacillus kaustophilus (strain HTA426).